A 320-amino-acid polypeptide reads, in one-letter code: Ferrochelatase (320 aa).

His-194 and Glu-275 together coordinate Fe cation.

The protein belongs to the ferrochelatase family.

The protein localises to the cytoplasm. The catalysed reaction is heme b + 2 H(+) = protoporphyrin IX + Fe(2+). It participates in porphyrin-containing compound metabolism; protoheme biosynthesis; protoheme from protoporphyrin-IX: step 1/1. Catalyzes the ferrous insertion into protoporphyrin IX. The protein is Ferrochelatase of Vibrio parahaemolyticus serotype O3:K6 (strain RIMD 2210633).